The sequence spans 93 residues: Small ribosomal subunit protein bS20c (93 aa).

It belongs to the bacterial ribosomal protein bS20 family.

The protein resides in the plastid. It localises to the chloroplast. Its function is as follows. Binds directly to 16S ribosomal RNA. The protein is Small ribosomal subunit protein bS20c of Phaeodactylum tricornutum (strain CCAP 1055/1).